The primary structure comprises 917 residues: Hexokinase-1 (917 aa).

Methionine 1 is subject to N-acetylmethionine. The mitochondrial-binding peptide (MBP) stretch occupies residues 1-10; it reads MIAAQLLAYY. 2 Hexokinase domains span residues 16–458 and 464–906; these read DDQV…MVTA and AEQH…LITA. ATP contacts are provided by residues arginine 30 and 84 to 89; that span reads DLGGSS. The tract at residues 73 to 207 is hexokinase small subdomain 1; that stretch reads DGSEKGDFIA…DYDANIVAVV (135 aa). 84–91 is a binding site for D-glucose 6-phosphate; that stretch reads DLGGSSFR. Residues serine 155, 172-173, and 208-209 contribute to the D-glucose site; these read TK and ND. A hexokinase large subdomain 1 region spans residues 208–447; that stretch reads NDTVGTMMTC…SDVRFLLSES (240 aa). Residues aspartate 209 and threonine 232 each contribute to the D-glucose 6-phosphate site. Residues asparagine 235, glutamate 260, and 291–294 each bind D-glucose; that span reads QLFE. At serine 337 the chain carries Phosphoserine. Asparagine 345 is a binding site for ATP. A D-glucose 6-phosphate-binding site is contributed by 413-415; sequence DGS. ATP is bound at residue 425 to 426; that stretch reads RR. Residues serine 449 and 532-536 each bind D-glucose 6-phosphate; that span reads DLGGT. A hexokinase small subdomain 2 region spans residues 521-655; the sequence is DGTENGDFLA…EFDLDVVAVV (135 aa). ATP is bound at residue 532 to 537; it reads DLGGTN. Residues 603–604, 620–621, and 656–657 each bind D-glucose; these read SF, TK, and ND. The hexokinase large subdomain 2 stretch occupies residues 656-895; it reads NDTVGTMMTC…CNVSFLLSED (240 aa). D-glucose 6-phosphate contacts are provided by aspartate 657 and threonine 680. Threonine 680 contributes to the ATP binding site. Residues 682–683, glutamate 708, and glutamate 742 contribute to the D-glucose site; that span reads SN. ATP contacts are provided by residues 747–748, 784–788, and 863–867; these read GM, TKFLS, and TLYKL. D-glucose 6-phosphate-binding positions include 861–863 and serine 897; that span reads DGT.

It belongs to the hexokinase family. Monomer. Interacts with RABL2/RABL2A; binds preferentially to GTP-bound RABL2. Interacts with VDAC1. The HK1-VDAC1 complex interacts with ATF2. Interacts (via N-terminal spermatogenic cell-specific region) with PFKM (via C-terminus). Interacts with SMAD5. As to expression, isoform 2: Erythrocyte specific. Isoform 3: Testis-specific. Isoform 4: Testis-specific.

It localises to the mitochondrion outer membrane. The protein resides in the cytoplasm. Its subcellular location is the cytosol. It carries out the reaction a D-hexose + ATP = a D-hexose 6-phosphate + ADP + H(+). It catalyses the reaction D-fructose + ATP = D-fructose 6-phosphate + ADP + H(+). The enzyme catalyses D-glucose + ATP = D-glucose 6-phosphate + ADP + H(+). The catalysed reaction is D-mannose + ATP = D-mannose 6-phosphate + ADP + H(+). It carries out the reaction D-glucosamine + ATP = D-glucosamine 6-phosphate + ADP + H(+). The protein operates within carbohydrate metabolism; hexose metabolism. It functions in the pathway carbohydrate degradation; glycolysis; D-glyceraldehyde 3-phosphate and glycerone phosphate from D-glucose: step 1/4. Hexokinase is an allosteric enzyme inhibited by its product D-glucose 6-phosphate. Hexokinase activity is inhibited by N-acetyl-D-glucosamine. Its function is as follows. Catalyzes the phosphorylation of various hexoses, such as D-glucose, D-glucosamine, D-fructose, D-mannose and 2-deoxy-D-glucose, to hexose 6-phosphate (D-glucose 6-phosphate, D-glucosamine 6-phosphate, D-fructose 6-phosphate, D-mannose 6-phosphate and 2-deoxy-D-glucose 6-phosphate, respectively). Does not phosphorylate N-acetyl-D-glucosamine. Mediates the initial step of glycolysis by catalyzing phosphorylation of D-glucose to D-glucose 6-phosphate. Involved in innate immunity and inflammation by acting as a pattern recognition receptor for bacterial peptidoglycan. When released in the cytosol, N-acetyl-D-glucosamine component of bacterial peptidoglycan inhibits the hexokinase activity of HK1 and causes its dissociation from mitochondrial outer membrane, thereby activating the NLRP3 inflammasome. The protein is Hexokinase-1 of Homo sapiens (Human).